Reading from the N-terminus, the 456-residue chain is Exodeoxyribonuclease 7 large subunit (456 aa).

The segment at 1–103 is binds ssDNA, also required to bind the small subunit; the sequence is MLPSQSPAIF…DYQIIVESMQ (103 aa).

The protein belongs to the XseA family. As to quaternary structure, heterooligomer composed of two different subunits with an approximate ratio of 4:1 for small to large subunit. Also estimated to have a 6:1 ration for small to large subunits. Does not require a metal cofactor. is required as a cofactor.

It localises to the cytoplasm. It catalyses the reaction Exonucleolytic cleavage in either 5'- to 3'- or 3'- to 5'-direction to yield nucleoside 5'-phosphates.. Its function is as follows. Bidirectionally degrades single-stranded DNA into large acid-insoluble oligonucleotides, which are then degraded further into small acid-soluble oligonucleotides. It can degrade 3' or 5' ss regions extending from the termini of duplex DNA molecules and displaced ss regions. It can also excise thymine dimers in vitro. ssDNA-binding requires both subunits. Required for production of the mature 5'-end of retron Ec78 or Ec83 msDNA. Overproduction of this subunit in the absence of an equivalent quantity of the small subunit is toxic, causing cell elongation and chromosome fragmentation or loss; its toxicity is mostly suppressed by RecA. The polypeptide is Exodeoxyribonuclease 7 large subunit (Escherichia coli (strain K12)).